Here is a 348-residue protein sequence, read N- to C-terminus: Anthranilate phosphoribosyltransferase (348 aa).

5-phospho-alpha-D-ribose 1-diphosphate-binding positions include G91, 94–95, T99, 101–104, 119–127, and S131; these read GD, NIST, and KHGNRSASG. Anthranilate is bound at residue G91. Mg(2+) is bound at residue S103. Residue N122 coordinates anthranilate. Position 177 (R177) interacts with anthranilate. Residues D236 and E237 each coordinate Mg(2+).

This sequence belongs to the anthranilate phosphoribosyltransferase family. In terms of assembly, homodimer. Mg(2+) serves as cofactor.

The catalysed reaction is N-(5-phospho-beta-D-ribosyl)anthranilate + diphosphate = 5-phospho-alpha-D-ribose 1-diphosphate + anthranilate. It participates in amino-acid biosynthesis; L-tryptophan biosynthesis; L-tryptophan from chorismate: step 2/5. Catalyzes the transfer of the phosphoribosyl group of 5-phosphorylribose-1-pyrophosphate (PRPP) to anthranilate to yield N-(5'-phosphoribosyl)-anthranilate (PRA). This Synechococcus elongatus (strain ATCC 33912 / PCC 7942 / FACHB-805) (Anacystis nidulans R2) protein is Anthranilate phosphoribosyltransferase.